Consider the following 184-residue polypeptide: MILMKDIVRDGDPVLRQVAKPLTFPLSDHYKQLAEDMMEYLVNSQDPKIAEKHQLRAGVGLAAPQVGEGVQMAALLVPDDKGEIIFKEVYVNPEIVSESVRQACLSEGEGCLSVDKVINGYVPRPDKLTIHYYTVDGEEKTIRLKDYPAIVSSHEIDHLNGHLFYDRINKKEPFALKEDTVVIS.

Positions 111 and 154 each coordinate Fe cation. Glu155 is an active-site residue. His158 contacts Fe cation.

The protein belongs to the polypeptide deformylase family. It depends on Fe(2+) as a cofactor.

It carries out the reaction N-terminal N-formyl-L-methionyl-[peptide] + H2O = N-terminal L-methionyl-[peptide] + formate. Removes the formyl group from the N-terminal Met of newly synthesized proteins. Requires at least a dipeptide for an efficient rate of reaction. N-terminal L-methionine is a prerequisite for activity but the enzyme has broad specificity at other positions. This is Peptide deformylase from Lactobacillus helveticus (strain DPC 4571).